The chain runs to 155 residues: Endoribonuclease YbeY (155 aa).

Residues His-114, His-118, and His-124 each contribute to the Zn(2+) site.

The protein belongs to the endoribonuclease YbeY family. Requires Zn(2+) as cofactor.

It is found in the cytoplasm. Single strand-specific metallo-endoribonuclease involved in late-stage 70S ribosome quality control and in maturation of the 3' terminus of the 16S rRNA. The chain is Endoribonuclease YbeY from Baumannia cicadellinicola subsp. Homalodisca coagulata.